The sequence spans 428 residues: Histidine--tRNA ligase (428 aa).

It belongs to the class-II aminoacyl-tRNA synthetase family. As to quaternary structure, homodimer.

The protein localises to the cytoplasm. It catalyses the reaction tRNA(His) + L-histidine + ATP = L-histidyl-tRNA(His) + AMP + diphosphate + H(+). The sequence is that of Histidine--tRNA ligase from Mesomycoplasma hyopneumoniae (strain 232) (Mycoplasma hyopneumoniae).